The primary structure comprises 262 residues: Pyridoxine 5'-phosphate synthase (262 aa).

3-amino-2-oxopropyl phosphate is bound at residue N6. Position 8 to 9 (8 to 9 (DH)) interacts with 1-deoxy-D-xylulose 5-phosphate. R17 lines the 3-amino-2-oxopropyl phosphate pocket. The active-site Proton acceptor is H43. 1-deoxy-D-xylulose 5-phosphate contacts are provided by R45 and H50. Residue E70 is the Proton acceptor of the active site. T102 contributes to the 1-deoxy-D-xylulose 5-phosphate binding site. H215 functions as the Proton donor in the catalytic mechanism. 3-amino-2-oxopropyl phosphate-binding positions include G216 and 237-238 (GH).

Belongs to the PNP synthase family. As to quaternary structure, homooctamer; tetramer of dimers.

It localises to the cytoplasm. The catalysed reaction is 3-amino-2-oxopropyl phosphate + 1-deoxy-D-xylulose 5-phosphate = pyridoxine 5'-phosphate + phosphate + 2 H2O + H(+). The protein operates within cofactor biosynthesis; pyridoxine 5'-phosphate biosynthesis; pyridoxine 5'-phosphate from D-erythrose 4-phosphate: step 5/5. In terms of biological role, catalyzes the complicated ring closure reaction between the two acyclic compounds 1-deoxy-D-xylulose-5-phosphate (DXP) and 3-amino-2-oxopropyl phosphate (1-amino-acetone-3-phosphate or AAP) to form pyridoxine 5'-phosphate (PNP) and inorganic phosphate. In Helicobacter pylori (strain G27), this protein is Pyridoxine 5'-phosphate synthase.